The sequence spans 504 residues: D-alanine--D-alanyl carrier protein ligase (504 aa).

Residue 152-153 (TS) coordinates ATP. Asp-197 is a D-alanine binding site. 292–297 (NTYGPT) is a binding site for ATP. Val-301 provides a ligand contact to D-alanine. ATP is bound by residues Asp-383, 394 to 397 (YNGR), and Lys-492. Lys-492 contributes to the D-alanine binding site.

Belongs to the ATP-dependent AMP-binding enzyme family. DltA subfamily.

The protein localises to the cytoplasm. It catalyses the reaction holo-[D-alanyl-carrier protein] + D-alanine + ATP = D-alanyl-[D-alanyl-carrier protein] + AMP + diphosphate. Its pathway is cell wall biogenesis; lipoteichoic acid biosynthesis. Its function is as follows. Catalyzes the first step in the D-alanylation of lipoteichoic acid (LTA), the activation of D-alanine and its transfer onto the D-alanyl carrier protein (Dcp) DltC. In an ATP-dependent two-step reaction, forms a high energy D-alanyl-AMP intermediate, followed by transfer of the D-alanyl residue as a thiol ester to the phosphopantheinyl prosthetic group of the Dcp. D-alanylation of LTA plays an important role in modulating the properties of the cell wall in Gram-positive bacteria, influencing the net charge of the cell wall. The sequence is that of D-alanine--D-alanyl carrier protein ligase from Bacillus cereus (strain B4264).